Reading from the N-terminus, the 151-residue chain is Macrodomain Ter protein (151 aa).

Belongs to the MatP family. Homodimer.

The protein localises to the cytoplasm. In terms of biological role, required for spatial organization of the terminus region of the chromosome (Ter macrodomain) during the cell cycle. Prevents early segregation of duplicated Ter macrodomains during cell division. Binds specifically to matS, which is a 13 bp signature motif repeated within the Ter macrodomain. This is Macrodomain Ter protein from Escherichia fergusonii (strain ATCC 35469 / DSM 13698 / CCUG 18766 / IAM 14443 / JCM 21226 / LMG 7866 / NBRC 102419 / NCTC 12128 / CDC 0568-73).